A 560-amino-acid chain; its full sequence is Formate--tetrahydrofolate ligase (560 aa).

69–76 contacts ATP; that stretch reads TPAGEGKS.

The protein belongs to the formate--tetrahydrofolate ligase family.

It catalyses the reaction (6S)-5,6,7,8-tetrahydrofolate + formate + ATP = (6R)-10-formyltetrahydrofolate + ADP + phosphate. It participates in one-carbon metabolism; tetrahydrofolate interconversion. The polypeptide is Formate--tetrahydrofolate ligase (Listeria monocytogenes serotype 4b (strain CLIP80459)).